We begin with the raw amino-acid sequence, 156 residues long: Arginine repressor (156 aa).

It belongs to the ArgR family.

The protein localises to the cytoplasm. It participates in amino-acid biosynthesis; L-arginine biosynthesis [regulation]. Its function is as follows. Regulates arginine biosynthesis genes. In Sodalis glossinidius (strain morsitans), this protein is Arginine repressor.